The sequence spans 586 residues: Arginine--tRNA ligase (586 aa).

Positions 128–138 (ANPTGPLHVGH) match the 'HIGH' region motif.

This sequence belongs to the class-I aminoacyl-tRNA synthetase family. As to quaternary structure, monomer.

Its subcellular location is the cytoplasm. The enzyme catalyses tRNA(Arg) + L-arginine + ATP = L-arginyl-tRNA(Arg) + AMP + diphosphate. This chain is Arginine--tRNA ligase, found in Thioalkalivibrio sulfidiphilus (strain HL-EbGR7).